The chain runs to 1072 residues: DNA-directed RNA polymerase subunit beta (1072 aa).

This sequence belongs to the RNA polymerase beta chain family. In terms of assembly, in plastids the minimal PEP RNA polymerase catalytic core is composed of four subunits: alpha, beta, beta', and beta''. When a (nuclear-encoded) sigma factor is associated with the core the holoenzyme is formed, which can initiate transcription.

The protein localises to the plastid. It is found in the chloroplast. The catalysed reaction is RNA(n) + a ribonucleoside 5'-triphosphate = RNA(n+1) + diphosphate. DNA-dependent RNA polymerase catalyzes the transcription of DNA into RNA using the four ribonucleoside triphosphates as substrates. The polypeptide is DNA-directed RNA polymerase subunit beta (Arabis hirsuta (Hairy rock-cress)).